The following is an 827-amino-acid chain: uncharacterized protein (827 aa).

The PAS 1 domain maps to 12-82 (FDADFEAILN…DMDIGVLSTG (71 aa)). The region spanning 212–264 (LDVEFRLAAAEGGYSWYRSRAATRRAEDGSILRWYGTVEDIDDRRKMFEALKE) is the PAC 1 domain. The PAS 2 domain occupies 265-335 (SEARFRAIAD…RVFYQAFDLR (71 aa)). In terms of domain architecture, PAC 2 spans 338 to 390 (VRMEYRLKRAGGGSAWVIDIGQPRFASDGTFLGFVGIALDITERRNAEQERLL). Positions 428–561 (TRLAILCLDL…GGGTIVQYEP (134 aa)) constitute a GGDEF domain. The EAL domain occupies 570 to 820 (RQRMKVSLRH…QAMALLKSRS (251 aa)).

This is an uncharacterized protein from Sinorhizobium fredii (strain NBRC 101917 / NGR234).